The following is an 89-amino-acid chain: uncharacterized protein (89 aa).

This is an uncharacterized protein from Geobacillus stearothermophilus (Bacillus stearothermophilus).